Consider the following 1083-residue polypeptide: Rho GTPase-activating protein 39 (1083 aa).

At serine 2 the chain carries N-acetylserine. WW domains follow at residues 25-58 and 63-97; these read NTRL…PPAG and RTSE…RPQG. Residues 110–154 are disordered; sequence KQNTESPRASAESSPGRGSSVSREGSTSSSLEPEPDTEKAQELPA. The segment covering 117 to 141 has biased composition (low complexity); sequence RASAESSPGRGSSVSREGSTSSSLE. The residue at position 169 (serine 169) is a Phosphoserine. The interval 226–369 is disordered; the sequence is AAQGNGYAPD…NKQGPPSPCQ (144 aa). Polar residues predominate over residues 245–256; that stretch reads PSGSQHSPSLQT. The span at 268-280 shows a compositional bias: basic and acidic residues; it reads PERRPSPFLKRAE. Phosphoserine occurs at positions 286, 384, 388, 406, and 407. 2 disordered regions span residues 405 to 545 and 570 to 599; these read GSSP…EAEG and MKQR…PGPV. Polar residues-rich tracts occupy residues 474 to 488 and 573 to 582; these read SWSS…TGYS and RSSWDSQQDG. 4 positions are modified to phosphoserine: serine 604, serine 690, serine 715, and serine 726. The MyTH4 domain occupies 722-879; sequence WSSESIKKPM…PNVEEIRHAK (158 aa). The region spanning 890-1078 is the Rho-GAP domain; the sequence is SALQEVMGMQ…VLIQHLDTSF (189 aa).

Its subcellular location is the nucleus. The chain is Rho GTPase-activating protein 39 (ARHGAP39) from Homo sapiens (Human).